A 398-amino-acid chain; its full sequence is Putative F-box protein At1g67450 (398 aa).

In terms of domain architecture, F-box spans T2–F56.

The chain is Putative F-box protein At1g67450 from Arabidopsis thaliana (Mouse-ear cress).